The primary structure comprises 473 residues: BPI fold-containing family B member 3 (473 aa).

An N-terminal signal peptide occupies residues 1–20 (MMPGVYALLLLWGLATPCLG). N139 carries an N-linked (GlcNAc...) asparagine glycan. An intrachain disulfide couples C161 to C196.

Belongs to the BPI/LBP/Plunc superfamily. BPI/LBP family. Highly expressed in olfactory mucosa but undetectable in thymus, kidney, lung, brain, spleen and liver.

The protein localises to the secreted. Its function is as follows. May have the capacity to recognize and bind specific classes of odorants. May act as a carrier molecule, transporting odorants across the mucus layer to access receptor sites. May serve as a primary defense mechanism by recognizing and removing potentially harmful odorants or pathogenic microorganisms from the mucosa or clearing excess odorant from mucus to enable new odorant stimuli to be received. The protein is BPI fold-containing family B member 3 of Rattus norvegicus (Rat).